Here is an 85-residue protein sequence, read N- to C-terminus: Homeobox protein knotted-1-like 4 (85 aa).

The 21-residue stretch at 1–21 (ELKYQLLKKYSGYLSSLRQEF) folds into the ELK domain. Positions 22–85 (SKKKKKGKLP…NQRKRHWKPS (64 aa)) form a DNA-binding region, homeobox; TALE-type.

This sequence belongs to the TALE/KNOX homeobox family. As to expression, strongly expressed in ear inflorescence primordia and shoot meristem. Weakly expressed in embryos. Absent from leaves.

It is found in the nucleus. In terms of biological role, probably binds to the DNA sequence 5'-TGAC-3'. This Zea mays (Maize) protein is Homeobox protein knotted-1-like 4 (KNOX4).